We begin with the raw amino-acid sequence, 208 residues long: Protein GrpE (208 aa).

Positions 1 to 12 are enriched in basic and acidic residues; the sequence is MTNKDESVEKNT. Residues 1–51 form a disordered region; that stretch reads MTNKDESVEKNTESTVEETNVKQNIDDSVEQAEESKGHLQDEAIEETSDEN. Residues 13–23 are compositionally biased toward polar residues; sequence ESTVEETNVKQ. Over residues 42-51 the composition is skewed to acidic residues; that stretch reads EAIEETSDEN.

It belongs to the GrpE family. As to quaternary structure, homodimer.

The protein resides in the cytoplasm. Functionally, participates actively in the response to hyperosmotic and heat shock by preventing the aggregation of stress-denatured proteins, in association with DnaK and GrpE. It is the nucleotide exchange factor for DnaK and may function as a thermosensor. Unfolded proteins bind initially to DnaJ; upon interaction with the DnaJ-bound protein, DnaK hydrolyzes its bound ATP, resulting in the formation of a stable complex. GrpE releases ADP from DnaK; ATP binding to DnaK triggers the release of the substrate protein, thus completing the reaction cycle. Several rounds of ATP-dependent interactions between DnaJ, DnaK and GrpE are required for fully efficient folding. In Staphylococcus aureus (strain USA300), this protein is Protein GrpE.